A 234-amino-acid chain; its full sequence is Glucosamine-6-phosphate deaminase (234 aa).

Residue Asp62 is the Proton acceptor; for enolization step of the active site. Residue Asn128 is the For ring-opening step of the active site. The Proton acceptor; for ring-opening step role is filled by His130. Glu135 serves as the catalytic For ring-opening step.

It belongs to the glucosamine/galactosamine-6-phosphate isomerase family. NagB subfamily.

The catalysed reaction is alpha-D-glucosamine 6-phosphate + H2O = beta-D-fructose 6-phosphate + NH4(+). It participates in amino-sugar metabolism; N-acetylneuraminate degradation; D-fructose 6-phosphate from N-acetylneuraminate: step 5/5. Functionally, catalyzes the reversible isomerization-deamination of glucosamine 6-phosphate (GlcN6P) to form fructose 6-phosphate (Fru6P) and ammonium ion. The protein is Glucosamine-6-phosphate deaminase of Streptococcus pyogenes serotype M3 (strain ATCC BAA-595 / MGAS315).